We begin with the raw amino-acid sequence, 418 residues long: IQ domain-containing protein C (418 aa).

An IQ domain is found at 6 to 35 (FLRKVSTLQAGFRGFLVRRQFQSLRAEYEA). 5 disordered regions span residues 101 to 142 (QKKT…SVSK), 230 to 264 (HHAEDSSHKGRLKPQKHPDSVTSAGKTTAGSKGRE), 280 to 299 (SQAGGDRVTKGPDHGGQPFK), 327 to 355 (AETQLPTLSENQNIEDRYSRKPSRSAGPC), and 376 to 418 (GSLD…LQWR). 2 stretches are compositionally biased toward polar residues: residues 129 to 142 (KASQGNSQDTSVSK) and 249 to 259 (SVTSAGKTTAG). The stretch at 141 to 176 (SKMENADLGLSQSQQELQEQRNHLAMELLWLQQAIN) forms a coiled coil. Polar residues predominate over residues 390 to 404 (PPSAGSSGHGNTSEL).

The sequence is that of IQ domain-containing protein C (Iqcc) from Mus musculus (Mouse).